The chain runs to 598 residues: Acetylcholine receptor subunit alpha-type acr-5 (598 aa).

A signal peptide spans 1-16 (MLPNIILILLIRYCSC). Over 17-323 (GAGSRVYEKY…HLVIRRKPLY (307 aa)) the chain is Extracellular. Asparagine 54, asparagine 71, asparagine 77, asparagine 134, asparagine 178, and asparagine 252 each carry an N-linked (GlcNAc...) asparagine glycan. The chain crosses the membrane as a helical span at residues 324–344 (YMINLVVPTSIITIVAVTGFF). Residues 345–356 (TPTSSSSERDEK) are Cytoplasmic-facing. A helical membrane pass occupies residues 357–377 (LYLGINTLLTMSVMMLMVCNQ). Residues 378–391 (MPSTSTYVPLMSWY) are Extracellular-facing. Residues 392 to 412 (YIGIIMVIVVGTFLATGVLAI) traverse the membrane as a helical segment. Residues 413–563 (HGQKHYNKPI…WEFLANVLDR (151 aa)) are Cytoplasmic-facing. A helical membrane pass occupies residues 564–584 (ILLTIFCGFTFAVFIILIGFD). Residues 585–598 (SFFTFHTDSPPKTM) lie on the Extracellular side of the membrane.

Belongs to the ligand-gated ion channel (TC 1.A.9) family. Acetylcholine receptor (TC 1.A.9.1) subfamily.

Its subcellular location is the postsynaptic cell membrane. The protein resides in the cell membrane. In terms of biological role, subunit of nicotinic acetylcholine receptor (nAChR). Involved in nAChR sensitivity to nicotine. Modulates locomotion towards the drug nicotine. The sequence is that of Acetylcholine receptor subunit alpha-type acr-5 from Caenorhabditis elegans.